Here is a 422-residue protein sequence, read N- to C-terminus: MLDARYLRENLETVEARLKTRGAGVDLERFRQLDGSRRELLQQTETLKALRNKVSDEISRIKDKSQAQDRIIEMREVSQRIKGLDEELKGVEEALEYFLLTVPNIPCAATPVGASEVDNVEVKKWGEKPVFDFAPKPHWEIGESLDILDFERGAKLAGARFTLYKGFGARLERALINFMLDLHTERHKYLEMLPPFMVNRESMTGTGQLPKFEEDLFHMEGVDYFLIPTAEVPVTNIHRGEILKAADLPLCYTAYTPCFRKEAGSYGKDTRGLIRQHQFNKVELVKFVHPAHSYNELDKLLDNAEEVLRLLGLPYRVVDLCTADIGFSAARTYDIEVWLPGQDCYREISSCSNFEDFQARRASIRFREDEKAKPEFVHTLNGSGLAVGRTLVAILENYQEADGSVSIPGALRPYMGGIEKIA.

229–231 (TAE) serves as a coordination point for L-serine. 260-262 (RKE) contributes to the ATP binding site. Residue Glu283 coordinates L-serine. 347-350 (EISS) contacts ATP. Residue Ser383 participates in L-serine binding.

The protein belongs to the class-II aminoacyl-tRNA synthetase family. Type-1 seryl-tRNA synthetase subfamily. In terms of assembly, homodimer. The tRNA molecule binds across the dimer.

It localises to the cytoplasm. The enzyme catalyses tRNA(Ser) + L-serine + ATP = L-seryl-tRNA(Ser) + AMP + diphosphate + H(+). It carries out the reaction tRNA(Sec) + L-serine + ATP = L-seryl-tRNA(Sec) + AMP + diphosphate + H(+). The protein operates within aminoacyl-tRNA biosynthesis; selenocysteinyl-tRNA(Sec) biosynthesis; L-seryl-tRNA(Sec) from L-serine and tRNA(Sec): step 1/1. Catalyzes the attachment of serine to tRNA(Ser). Is also able to aminoacylate tRNA(Sec) with serine, to form the misacylated tRNA L-seryl-tRNA(Sec), which will be further converted into selenocysteinyl-tRNA(Sec). This chain is Serine--tRNA ligase, found in Geotalea uraniireducens (strain Rf4) (Geobacter uraniireducens).